Reading from the N-terminus, the 542-residue chain is CTP synthase (542 aa).

The amidoligase domain stretch occupies residues 1–265 (MARYIFITGG…DDEVLAAFGL (265 aa)). Serine 13 contributes to the CTP binding site. Serine 13 contacts UTP. 14–19 (SLGKGL) lines the ATP pocket. An L-glutamine-binding site is contributed by tyrosine 54. Aspartate 71 lines the ATP pocket. Mg(2+) is bound by residues aspartate 71 and glutamate 139. Residues 146–148 (DIE), 186–191 (KTKPTQ), and lysine 222 contribute to the CTP site. Residues 186–191 (KTKPTQ) and lysine 222 each bind UTP. Residue 238 to 240 (RDA) coordinates ATP. One can recognise a Glutamine amidotransferase type-1 domain in the interval 290–541 (TIAIVGKYTG…IQAAVVQSRL (252 aa)). Glycine 352 is a binding site for L-glutamine. The active-site Nucleophile; for glutamine hydrolysis is the cysteine 379. Residues 380 to 383 (FGMQ), glutamate 403, and arginine 469 each bind L-glutamine. Residues histidine 514 and glutamate 516 contribute to the active site.

The protein belongs to the CTP synthase family. As to quaternary structure, homotetramer.

The catalysed reaction is UTP + L-glutamine + ATP + H2O = CTP + L-glutamate + ADP + phosphate + 2 H(+). It carries out the reaction L-glutamine + H2O = L-glutamate + NH4(+). The enzyme catalyses UTP + NH4(+) + ATP = CTP + ADP + phosphate + 2 H(+). It participates in pyrimidine metabolism; CTP biosynthesis via de novo pathway; CTP from UDP: step 2/2. Allosterically activated by GTP, when glutamine is the substrate; GTP has no effect on the reaction when ammonia is the substrate. The allosteric effector GTP functions by stabilizing the protein conformation that binds the tetrahedral intermediate(s) formed during glutamine hydrolysis. Inhibited by the product CTP, via allosteric rather than competitive inhibition. Functionally, catalyzes the ATP-dependent amination of UTP to CTP with either L-glutamine or ammonia as the source of nitrogen. Regulates intracellular CTP levels through interactions with the four ribonucleotide triphosphates. This is CTP synthase from Nitrobacter hamburgensis (strain DSM 10229 / NCIMB 13809 / X14).